An 83-amino-acid polypeptide reads, in one-letter code: MVTIRLQRGGAKKRPFYQVVVADSRRSRDGRFIENIGFFNPTAQGQEERLRLDLDRVEHWVGNGAGLSDRVARLVKDAQKAAA.

This sequence belongs to the bacterial ribosomal protein bS16 family.

The protein is Small ribosomal subunit protein bS16 of Pseudoalteromonas atlantica (strain T6c / ATCC BAA-1087).